A 353-amino-acid polypeptide reads, in one-letter code: Phosphoribosylformylglycinamidine cyclo-ligase (353 aa).

It belongs to the AIR synthase family.

Its subcellular location is the cytoplasm. It catalyses the reaction 2-formamido-N(1)-(5-O-phospho-beta-D-ribosyl)acetamidine + ATP = 5-amino-1-(5-phospho-beta-D-ribosyl)imidazole + ADP + phosphate + H(+). It functions in the pathway purine metabolism; IMP biosynthesis via de novo pathway; 5-amino-1-(5-phospho-D-ribosyl)imidazole from N(2)-formyl-N(1)-(5-phospho-D-ribosyl)glycinamide: step 2/2. In Methylocella silvestris (strain DSM 15510 / CIP 108128 / LMG 27833 / NCIMB 13906 / BL2), this protein is Phosphoribosylformylglycinamidine cyclo-ligase.